The chain runs to 599 residues: Proline--tRNA ligase (599 aa).

The protein belongs to the class-II aminoacyl-tRNA synthetase family. ProS type 1 subfamily. Homodimer.

Its subcellular location is the cytoplasm. The enzyme catalyses tRNA(Pro) + L-proline + ATP = L-prolyl-tRNA(Pro) + AMP + diphosphate. Catalyzes the attachment of proline to tRNA(Pro) in a two-step reaction: proline is first activated by ATP to form Pro-AMP and then transferred to the acceptor end of tRNA(Pro). As ProRS can inadvertently accommodate and process non-cognate amino acids such as alanine and cysteine, to avoid such errors it has two additional distinct editing activities against alanine. One activity is designated as 'pretransfer' editing and involves the tRNA(Pro)-independent hydrolysis of activated Ala-AMP. The other activity is designated 'posttransfer' editing and involves deacylation of mischarged Ala-tRNA(Pro). The misacylated Cys-tRNA(Pro) is not edited by ProRS. The polypeptide is Proline--tRNA ligase (Prochlorococcus marinus (strain MIT 9313)).